The sequence spans 117 residues: uncharacterized protein (117 aa).

It localises to the cytoplasm. It is found in the nucleus. This is an uncharacterized protein from Saccharomyces cerevisiae (strain ATCC 204508 / S288c) (Baker's yeast).